The primary structure comprises 141 residues: Large ribosomal subunit protein uL13 (141 aa).

Belongs to the universal ribosomal protein uL13 family. Part of the 50S ribosomal subunit.

Functionally, this protein is one of the early assembly proteins of the 50S ribosomal subunit, although it is not seen to bind rRNA by itself. It is important during the early stages of 50S assembly. The protein is Large ribosomal subunit protein uL13 of Helicobacter pylori (strain P12).